We begin with the raw amino-acid sequence, 193 residues long: Ectoine TRAP transporter small permease protein TeaB (193 aa).

The next 4 membrane-spanning stretches (helical) occupy residues 33 to 55, 65 to 82, 103 to 125, and 145 to 167; these read ILAL…RFAL, VNRI…GYAA, RALM…YYSV, and IFII…LFTA.

This sequence belongs to the TRAP transporter small permease family. As to quaternary structure, the complex comprises the extracytoplasmic solute receptor protein TeaA, and the two transmembrane proteins TeaB and TeaC.

It localises to the cell inner membrane. In terms of biological role, part of the tripartite ATP-independent periplasmic (TRAP) transport system TeaABC involved in the uptake of ectoine and hydroxyectoine in response to osmotic upshock. Probably functions as a recovery system for synthesized ectoine that leaks out of the cell. The sequence is that of Ectoine TRAP transporter small permease protein TeaB (teaB) from Halomonas elongata (strain ATCC 33173 / DSM 2581 / NBRC 15536 / NCIMB 2198 / 1H9).